A 317-amino-acid chain; its full sequence is Protoheme IX farnesyltransferase (317 aa).

The next 6 helical transmembrane spans lie at 25–45 (FFAL…LVGM), 54–74 (PVIG…SGCL), 117–137 (LMLG…TIVF), 167–189 (IGQA…IIFI), 244–264 (LGFG…AMLV), and 281–301 (AAMS…SALL).

This sequence belongs to the UbiA prenyltransferase family. Protoheme IX farnesyltransferase subfamily.

The protein resides in the cell inner membrane. It catalyses the reaction heme b + (2E,6E)-farnesyl diphosphate + H2O = Fe(II)-heme o + diphosphate. The protein operates within porphyrin-containing compound metabolism; heme O biosynthesis; heme O from protoheme: step 1/1. Its function is as follows. Converts heme B (protoheme IX) to heme O by substitution of the vinyl group on carbon 2 of heme B porphyrin ring with a hydroxyethyl farnesyl side group. The polypeptide is Protoheme IX farnesyltransferase (Methylobacterium nodulans (strain LMG 21967 / CNCM I-2342 / ORS 2060)).